Consider the following 1198-residue polypeptide: Integrator complex subunit 2 (1198 aa).

Residues 421–437 traverse the membrane as a helical segment; the sequence is FVSLSFCMLLAFSTLVS.

Belongs to the Integrator subunit 2 family. In terms of assembly, component of the Integrator complex, composed of core subunits INTS1, INTS2, INTS3, INTS4, INTS5, INTS6, INTS7, INTS8, INTS9/RC74, INTS10, INTS11/CPSF3L, INTS12, INTS13, INTS14 and INTS15. The core complex associates with protein phosphatase 2A subunits PPP2CA and PPP2R1A, to form the Integrator-PP2A (INTAC) complex.

The protein resides in the nucleus. Its subcellular location is the nucleus membrane. It localises to the cytoplasm. Its function is as follows. Component of the integrator complex, a multiprotein complex that terminates RNA polymerase II (Pol II) transcription in the promoter-proximal region of genes. The integrator complex provides a quality checkpoint during transcription elongation by driving premature transcription termination of transcripts that are unfavorably configured for transcriptional elongation: the complex terminates transcription by (1) catalyzing dephosphorylation of the C-terminal domain (CTD) of Pol II subunit POLR2A/RPB1 and SUPT5H/SPT5, (2) degrading the exiting nascent RNA transcript via endonuclease activity and (3) promoting the release of Pol II from bound DNA. The integrator complex is also involved in terminating the synthesis of non-coding Pol II transcripts, such as enhancer RNAs (eRNAs), small nuclear RNAs (snRNAs), telomerase RNAs and long non-coding RNAs (lncRNAs). Mediates recruitment of cytoplasmic dynein to the nuclear envelope, probably as component of the integrator complex. In Mus musculus (Mouse), this protein is Integrator complex subunit 2 (Ints2).